Here is a 313-residue protein sequence, read N- to C-terminus: Porphobilinogen deaminase (313 aa).

Cys-242 bears the S-(dipyrrolylmethanemethyl)cysteine mark.

Belongs to the HMBS family. Monomer. Dipyrromethane serves as cofactor.

It carries out the reaction 4 porphobilinogen + H2O = hydroxymethylbilane + 4 NH4(+). Its pathway is porphyrin-containing compound metabolism; protoporphyrin-IX biosynthesis; coproporphyrinogen-III from 5-aminolevulinate: step 2/4. Its function is as follows. Tetrapolymerization of the monopyrrole PBG into the hydroxymethylbilane pre-uroporphyrinogen in several discrete steps. The chain is Porphobilinogen deaminase from Yersinia pseudotuberculosis serotype O:1b (strain IP 31758).